Here is a 302-residue protein sequence, read N- to C-terminus: Putative S-adenosyl-L-methionine-dependent methyltransferase MAP_1622c (302 aa).

Residues D129 and 158–159 each bind S-adenosyl-L-methionine; that span reads DL.

The protein belongs to the UPF0677 family.

Exhibits S-adenosyl-L-methionine-dependent methyltransferase activity. In Mycolicibacterium paratuberculosis (strain ATCC BAA-968 / K-10) (Mycobacterium paratuberculosis), this protein is Putative S-adenosyl-L-methionine-dependent methyltransferase MAP_1622c.